Reading from the N-terminus, the 758-residue chain is Spastin (758 aa).

The interval 1–103 is disordered; that stretch reads MVRTKNQSSS…SPRSGHHHSY (103 aa). The Cytoplasmic portion of the chain corresponds to 1–121; sequence MVRTKNQSSS…KQNLYVVSFP (121 aa). The segment at 1 to 210 is required for localization to punctate cytoplasmic foci; the sequence is MVRTKNQSSS…RPIQPLEMAA (210 aa). Composition is skewed to low complexity over residues 8–28, 43–58, 66–76, and 85–95; these read SSSS…SSGA, RSSS…AGGS, SSNRRSPGSSP, and TDDLTPTTCSP. An intramembrane region (helical) is located at residues 122–142; that stretch reads IIFLFNVLRSLIYQLFCIFRY. Residues 143–758 lie on the Cytoplasmic side of the membrane; it reads LYGASTKVIY…WSQDYGDITI (616 aa). Composition is skewed to polar residues over residues 169–180 and 189–198; these read SKEQQQSLNHPS and QEQQLSNQPQ. Residues 169–202 are disordered; that stretch reads SKEQQQSLNHPSELNREGDGQEQQLSNQPQRFRP. Positions 208–758 are sufficient for interaction with microtubules and microtubule severing; that stretch reads MAANRPGGGY…WSQDYGDITI (551 aa). The 76-residue stretch at 233 to 308 folds into the MIT domain; that stretch reads HRRAFEYISK…SMARDRLHFL (76 aa). Residues 323–339 are compositionally biased toward basic and acidic residues; it reads KEKQKEEARSKPQKSRE. The interval 323–454 is disordered; that stretch reads KEKQKEEARS…GPSGSGASTP (132 aa). Polar residues-rich tracts occupy residues 390 to 406 and 425 to 454; these read NKSQ…TSVG and QFSS…ASTP. The segment at 443 to 455 is required for interaction with microtubules; that stretch reads NNGPSGSGASTPV. An ATP-binding site is contributed by 523 to 530; that stretch reads GPPGNGKT.

The protein belongs to the AAA ATPase family. Spastin subfamily. As to quaternary structure, homohexamer. The homohexamer is stabilized by ATP-binding. The homohexamer may adopt a ring conformation through which microtubules pass prior to being severed. Interacts with microtubules. Interacts with atl; may be involved in microtubule dynamics.

Its subcellular location is the membrane. The protein resides in the cytoplasm. It is found in the cytoskeleton. It localises to the microtubule organizing center. The protein localises to the centrosome. Its subcellular location is the chromosome. The protein resides in the lipid droplet. The catalysed reaction is n ATP + n H2O + a microtubule = n ADP + n phosphate + (n+1) alpha/beta tubulin heterodimers.. Functionally, ATP-dependent microtubule severing protein. Stimulates microtubule minus-end depolymerization and poleward microtubule flux in the mitotic spindle. Regulates microtubule stability in the neuromuscular junction synapse. Involved in lipid metabolism by regulating the size and distribution of lipid droplets. Involved in axon regeneration by regulating microtubule severing. The protein is Spastin of Drosophila simulans (Fruit fly).